The following is a 116-amino-acid chain: Dynein light chain Tctex-type 3 (116 aa).

3'-nitrotyrosine is present on tyrosine 4.

It belongs to the dynein light chain Tctex-type family. In terms of assembly, homodimer. The cytoplasmic dynein 1 complex consists of two catalytic heavy chains (HCs) and a number of non-catalytic subunits presented by intermediate chains (ICs), light intermediate chains (LICs) and light chains (LCs); the composition seems to vary in respect to the IC, LIC and LC composition. The heavy chain homodimer serves as a scaffold for the probable homodimeric assembly of the respective non-catalytic subunits. The ICs and LICs bind directly to the HC dimer and the LCs assemble on the IC dimer. DYNLT1 and DYNLT3 compete for association with dynein IC (DYNC1I1 or DYNC1I2). Self-associates. Interacts with DYNC1I1 and DYNC1I2. Interacts with BUB3. Interacts with SATB1 in nucleus to form complex with matrix attachment regions (MARs) of DNA.

It localises to the nucleus. Its subcellular location is the cytoplasm. It is found in the cytoskeleton. The protein localises to the chromosome. The protein resides in the centromere. It localises to the kinetochore. Acts as one of several non-catalytic accessory components of the cytoplasmic dynein 1 complex that are thought to be involved in linking dynein to cargos and to adapter proteins that regulate dynein function. Cytoplasmic dynein 1 acts as a motor for the intracellular retrograde motility of vesicles and organelles along microtubules. Probably binds BUB3 as part of transport cargo. Required for the efficient progression through mitosis. This chain is Dynein light chain Tctex-type 3 (DYNLT3), found in Canis lupus familiaris (Dog).